A 171-amino-acid polypeptide reads, in one-letter code: Transcription antitermination protein NusB (171 aa).

It belongs to the NusB family.

Its function is as follows. Involved in transcription antitermination. Required for transcription of ribosomal RNA (rRNA) genes. Binds specifically to the boxA antiterminator sequence of the ribosomal RNA (rrn) operons. This chain is Transcription antitermination protein NusB, found in Brucella suis (strain ATCC 23445 / NCTC 10510).